The following is a 464-amino-acid chain: Glycosyl hydrolase family 109 protein 1 (464 aa).

The N-terminal stretch at 1–16 (MFKHLNALFIGLALFA) is a signal peptide. Cys-17 carries the N-palmitoyl cysteine lipid modification. The S-diacylglycerol cysteine moiety is linked to residue Cys-17. NAD(+) is bound by residues 63–64 (MR), Asp-85, 134–137 (WKHH), 154–155 (EV), and Asn-183. Residues Tyr-212, Arg-228, 240-243 (YATH), and Tyr-318 each bind substrate. Tyr-240 contacts NAD(+).

It belongs to the Gfo/Idh/MocA family. Glycosyl hydrolase 109 subfamily. NAD(+) is required as a cofactor.

Its subcellular location is the cell membrane. Glycosidase. Has no alpha-N-acetylgalactosaminidase activity. The polypeptide is Glycosyl hydrolase family 109 protein 1 (Bacteroides fragilis (strain ATCC 25285 / DSM 2151 / CCUG 4856 / JCM 11019 / LMG 10263 / NCTC 9343 / Onslow / VPI 2553 / EN-2)).